The following is a 1270-amino-acid chain: ATP-dependent helicase/nuclease subunit A (1270 aa).

One can recognise a UvrD-like helicase ATP-binding domain in the interval 3–476 (TKWTEEQELA…IMLYKNFRSR (474 aa)). Residue 24-31 (AAAGSGKT) coordinates ATP. Positions 528-823 (IENLKVAGDI…RIMSIHKSKG (296 aa)) constitute a UvrD-like helicase C-terminal domain.

This sequence belongs to the helicase family. AddA subfamily. Heterodimer of AddA and AddB/RexB. It depends on Mg(2+) as a cofactor.

The catalysed reaction is Couples ATP hydrolysis with the unwinding of duplex DNA by translocating in the 3'-5' direction.. The enzyme catalyses ATP + H2O = ADP + phosphate + H(+). The heterodimer acts as both an ATP-dependent DNA helicase and an ATP-dependent, dual-direction single-stranded exonuclease. Recognizes the chi site generating a DNA molecule suitable for the initiation of homologous recombination. The AddA nuclease domain is required for chi fragment generation; this subunit has the helicase and 3' -&gt; 5' nuclease activities. The protein is ATP-dependent helicase/nuclease subunit A of Clostridium perfringens (strain SM101 / Type A).